Consider the following 421-residue polypeptide: Extracellular signal-regulated kinase 1 (421 aa).

Residues 70–375 (YQILEIVGEG…VEDALKHPYL (306 aa)) form the Protein kinase domain. ATP is bound by residues 76 to 84 (VGEGAYGIV) and Lys99. The Proton acceptor role is filled by Asp194. A Phosphothreonine modification is found at Thr230. The TXY signature appears at 230-232 (TEY). Tyr232 carries the phosphotyrosine modification.

This sequence belongs to the protein kinase superfamily. CMGC Ser/Thr protein kinase family. MAP kinase subfamily. Mg(2+) serves as cofactor. In terms of processing, dually phosphorylated on Thr-230 and Tyr-232, which activates the enzyme.

The enzyme catalyses L-seryl-[protein] + ATP = O-phospho-L-seryl-[protein] + ADP + H(+). It carries out the reaction L-threonyl-[protein] + ATP = O-phospho-L-threonyl-[protein] + ADP + H(+). With respect to regulation, activated by tyrosine and threonine phosphorylation. This Candida albicans (strain SC5314 / ATCC MYA-2876) (Yeast) protein is Extracellular signal-regulated kinase 1 (CEK1).